The following is a 750-amino-acid chain: EF-hand domain-containing family member C2 (750 aa).

3 consecutive DM10 domains span residues 75-182, 226-368, and 430-537; these read DKQV…KKIG, DGKV…RTKY, and ISNI…ENNT. Positions 557 to 592 constitute an EF-hand domain; sequence SKSREITQVFAAADYNHTKVVPYNTFRDILMSITMG.

Microtubule inner protein component of sperm flagellar doublet microtubules.

Its subcellular location is the cytoplasm. The protein localises to the cytoskeleton. It localises to the cilium axoneme. The protein resides in the flagellum axoneme. Functionally, microtubule inner protein (MIP) part of the dynein-decorated doublet microtubules (DMTs) in cilia axoneme, which is required for motile cilia beating. The sequence is that of EF-hand domain-containing family member C2 (Efhc2) from Mus musculus (Mouse).